The primary structure comprises 439 residues: Xylose isomerase (439 aa).

Residues H101 and D104 contribute to the active site. Mg(2+) is bound by residues E232, E268, H271, D296, D307, D309, and D339.

Belongs to the xylose isomerase family. Homotetramer. It depends on Mg(2+) as a cofactor.

Its subcellular location is the cytoplasm. The catalysed reaction is alpha-D-xylose = alpha-D-xylulofuranose. This chain is Xylose isomerase, found in Pectobacterium atrosepticum (strain SCRI 1043 / ATCC BAA-672) (Erwinia carotovora subsp. atroseptica).